The following is a 387-amino-acid chain: Exodeoxyribonuclease 7 large subunit (387 aa).

This sequence belongs to the XseA family. In terms of assembly, heterooligomer composed of large and small subunits.

The protein resides in the cytoplasm. It catalyses the reaction Exonucleolytic cleavage in either 5'- to 3'- or 3'- to 5'-direction to yield nucleoside 5'-phosphates.. In terms of biological role, bidirectionally degrades single-stranded DNA into large acid-insoluble oligonucleotides, which are then degraded further into small acid-soluble oligonucleotides. In Campylobacter fetus subsp. fetus (strain 82-40), this protein is Exodeoxyribonuclease 7 large subunit.